The following is a 255-amino-acid chain: Proteasome subunit alpha (255 aa).

This sequence belongs to the peptidase T1A family. The 20S proteasome core is composed of 14 alpha and 14 beta subunits that assemble into four stacked heptameric rings, resulting in a barrel-shaped structure. The two inner rings, each composed of seven catalytic beta subunits, are sandwiched by two outer rings, each composed of seven alpha subunits. The catalytic chamber with the active sites is on the inside of the barrel. Has a gated structure, the ends of the cylinder being occluded by the N-termini of the alpha-subunits. Is capped at one or both ends by the proteasome regulatory ATPase, PAN.

The protein localises to the cytoplasm. With respect to regulation, the formation of the proteasomal ATPase PAN-20S proteasome complex, via the docking of the C-termini of PAN into the intersubunit pockets in the alpha-rings, triggers opening of the gate for substrate entry. Interconversion between the open-gate and close-gate conformations leads to a dynamic regulation of the 20S proteasome proteolysis activity. Component of the proteasome core, a large protease complex with broad specificity involved in protein degradation. This Natronomonas pharaonis (strain ATCC 35678 / DSM 2160 / CIP 103997 / JCM 8858 / NBRC 14720 / NCIMB 2260 / Gabara) (Halobacterium pharaonis) protein is Proteasome subunit alpha.